The following is a 364-amino-acid chain: ERCC4 domain-containing protein EP364R (364 aa).

The region spanning 3-102 (FLVADHREHH…QLYFFVEGPA (100 aa)) is the ERCC4 domain. Positions 319-328 (ASRPATQPAA) are enriched in polar residues. The disordered stretch occupies residues 319–352 (ASRPATQPAATQPLHEVSDDATSNASDTSSPIGH). Positions 338 to 348 (DATSNASDTSS) are enriched in low complexity.

Belongs to the asfivirus EP364R family.

In terms of biological role, plays a role in the inhibition of type I interferon signaling pathway. Mechanistically, specifically interacts with 2',3'-cGAMP and cleaves it via its phosphodiesterase activity. In turn, prevents 2',3'-cGAMP interaction with host ER-resident STING1 leading to inhibition of downstream signaling pathway and type I interferon production. This African swine fever virus (strain Badajoz 1971 Vero-adapted) (Ba71V) protein is ERCC4 domain-containing protein EP364R.